Consider the following 964-residue polypeptide: Reticulon-3 (964 aa).

Residues 1-24 (MAESSAATQSPSVSSSSSGAEPSA) show a composition bias toward low complexity. Disordered regions lie at residues 1–32 (MAES…GGSP), 68–109 (AGLS…SETL), and 179–200 (WVVK…DRSA). Ala2 bears the N-acetylalanine mark. Over 2–795 (AESSAATQSP…KKTGFVFGTT (794 aa)) the chain is Cytoplasmic. Ser31 is modified (phosphoserine). The span at 80–91 (SKSMTSSFLSSS) shows a compositional bias: low complexity. Residues Ser217, Ser225, Ser230, Ser233, Ser270, Ser303, and Ser429 each carry the phosphoserine modification. Residues 479–536 (ITEKPDSLPSAAAKTSEREIKETPSRETVRSEMCENSEQPQAQPETPTQKSLEGEVAS) form a disordered region. Basic and acidic residues predominate over residues 493–511 (TSEREIKETPSRETVRSEM). The span at 516 to 527 (EQPQAQPETPTQ) shows a compositional bias: low complexity. Ser529 carries the post-translational modification Phosphoserine. Thr593 carries the phosphothreonine modification. A phosphoserine mark is found at Ser596, Ser597, and Ser673. Disordered regions lie at residues 645-674 (ELSG…TMSP) and 697-723 (VQDE…SSSD). Positions 712–723 (FAPQSGPQSSSD) are enriched in polar residues. The 189-residue stretch at 776–964 (VHDLIFWRDV…LPGIAKKKAE (189 aa)) folds into the Reticulon domain. An intramembrane region (helical) is located at residues 796–819 (LIMLLSLAAFSVISVVSYLILALL). At 820 to 876 (SVTISFRVYKSVIQAVQKSEEGHPFKAYLDVDITLSSEAFHNYMNAAMVHVNKALKL) the chain is on the cytoplasmic side. Residues 877–899 (IIRLFLVEDLVDSLKLAVFMWLM) constitute an intramembrane region (helical). Over 900 to 903 (TYVG) the chain is Cytoplasmic. Positions 904 to 926 (AVFNGITLLILAELLVFSVPIVY) form an intramembrane region, helical. The tract at residues 919-964 (VFSVPIVYEKYKTQIDHYVGIARDQTKSIVEKIQAKLPGIAKKKAE) is interaction with FADD. Over 927–964 (EKYKTQIDHYVGIARDQTKSIVEKIQAKLPGIAKKKAE) the chain is Cytoplasmic. The segment at 932 to 934 (QID) is interaction with BACE1.

In terms of assembly, homodimer. Interacts with RTN4. Isoform 3 interacts with BACE1, BACE2, BCL2 and FADD. Interacts with ATL1 and ATL2. Isoform 3 interacts with TMEM33. Interacts with ZFYVE27 and with KIF5A in a ZFYVE27-dependent manner. Interacts with RIGI. Interacts with TRIM25. As to expression, isoform 1, isoform 3, isoform 4 and isoform 5 are expressed in spinal cord. Isoform 1 is present in brain, where it is expressed in the neurons of cerebral cortex, hippocampus, hypothalamus and cerebellum (at protein level).

The protein localises to the endoplasmic reticulum membrane. It localises to the golgi apparatus membrane. May be involved in membrane trafficking in the early secretory pathway. Inhibits BACE1 activity and amyloid precursor protein processing. May induce caspase-8 cascade and apoptosis. May favor BCL2 translocation to the mitochondria upon endoplasmic reticulum stress. Induces the formation of endoplasmic reticulum tubules. Also acts as an inflammation-resolving regulator by interacting with both TRIM25 and RIGI, subsequently impairing RIGI 'Lys-63'-linked polyubiquitination leading to IRF3 and NF-kappa-B inhibition. This chain is Reticulon-3 (Rtn3), found in Mus musculus (Mouse).